We begin with the raw amino-acid sequence, 314 residues long: MAEKTTSTRYAVVTGGNKGIGYETCRQLASKGVVVVLTSRDEKKGIEAIERLKEESNFTDEHILFHQLDIMDPASISSLVNLIKTKFGRLDILINNAGISGVMVEGDVQVLKEILERYISIVFTEDENGEEGGWTKSGPGSVTNYELTKECIETNYYGAKRMTEAFIPLLQLSNSPRIVNVASSMGKLKLLCNKWAIEVLRDADSLTEEKVDQVVNEFLKDFTEKSTESKGWPSYFTAYKVSKASLIAYTRVLATKYPNFRINSVCPGYCKTDVNANTGSLTAGEGAESLVNLALLPNDGPSGLFFYRKEVTFF.

13–36 (VTGGNKGIGYETCRQLASKGVVVV) lines the NADP(+) pocket. Serine 183 contacts substrate. The Proton acceptor role is filled by tyrosine 239.

Belongs to the short-chain dehydrogenases/reductases (SDR) family. In terms of assembly, monomer. Expressed in flowers and red fruit tissues. Not detected in leaves, stems, roots or green fruits.

The catalysed reaction is (+)-neomenthol + NADP(+) = (1R,4S)-menthone + NADPH + H(+). Its function is as follows. Involved in basal resistance against pathogens. This Capsicum annuum (Capsicum pepper) protein is (+)-neomenthol dehydrogenase (MNR1).